The following is a 134-amino-acid chain: RuBisCO chaperone RbcX (134 aa).

The disordered stretch occupies residues Ser-97 to Glu-134. Over residues Gln-111–Pro-122 the composition is skewed to polar residues.

It belongs to the RbcX family. In terms of assembly, homodimer (RbcX2). Interacts with the exposed C-terminal peptide of RbcL ('Glu-459-Asp-468'); binds 2 RbcL peptides per RbcX2, stapling them into an RbcL2 dimer. A slightly longer peptide binds with a higher affinity, but no long-term stable interaction with RbcL is detected. Contacts a second RbcL monomer via its peripheral polar surface.

It is found in the carboxysome. It localises to the cytoplasm. Functionally, an RbcL-specific chaperone. Required for assembly of the RbcL8 core, acting downstream of the major chaperonin (GroEL-GroES). Acts on newly folded RbcL, has a transient dynamic interaction with RbcL and is eventually displaced by RbcS. The central cleft of the RbcX homodimer (RbcX2) binds the C-terminus of an RbcL monomer, stabilizing the C-terminus and probably preventing its reassociation with chaperonin GroEL-ES. At the same time the peripheral region of RbcX2 binds a second RbcL monomer, bridging the RbcL homodimers in the correct orientation. The RbcX2(2)-bound RbcL dimers then assemble into the RbcL8 core (RbcL8-(RbcX2)8). RbcS binding triggers the release of RbcX2. Required for optimal reconstitution of RuBisCO into its RbcL8S8 holoenzyme form upon expression of rbcL-rbcS subunits in E.coli, and probably also in situ. A frameshift mutation that replaces half the protein reduces accumulation of both RbcL and RbcS subunits and halves activity of RuBisCO in situ and in E.coli. The polypeptide is RuBisCO chaperone RbcX (Picosynechococcus sp. (strain ATCC 27264 / PCC 7002 / PR-6) (Agmenellum quadruplicatum)).